Here is a 381-residue protein sequence, read N- to C-terminus: Queuine tRNA-ribosyltransferase (381 aa).

Residue D96 is the Proton acceptor of the active site. Residues 96-100, D150, Q193, and G220 contribute to the substrate site; that span reads DSGGF. Residues 251 to 257 are RNA binding; it reads GVGSPDA. Catalysis depends on D270, which acts as the Nucleophile. Positions 275–279 are RNA binding; important for wobble base 34 recognition; sequence TRIAR. Positions 308, 310, 313, and 339 each coordinate Zn(2+).

Belongs to the queuine tRNA-ribosyltransferase family. In terms of assembly, homodimer. Within each dimer, one monomer is responsible for RNA recognition and catalysis, while the other monomer binds to the replacement base PreQ1. Zn(2+) serves as cofactor.

The enzyme catalyses 7-aminomethyl-7-carbaguanine + guanosine(34) in tRNA = 7-aminomethyl-7-carbaguanosine(34) in tRNA + guanine. Its pathway is tRNA modification; tRNA-queuosine biosynthesis. Functionally, catalyzes the base-exchange of a guanine (G) residue with the queuine precursor 7-aminomethyl-7-deazaguanine (PreQ1) at position 34 (anticodon wobble position) in tRNAs with GU(N) anticodons (tRNA-Asp, -Asn, -His and -Tyr). Catalysis occurs through a double-displacement mechanism. The nucleophile active site attacks the C1' of nucleotide 34 to detach the guanine base from the RNA, forming a covalent enzyme-RNA intermediate. The proton acceptor active site deprotonates the incoming PreQ1, allowing a nucleophilic attack on the C1' of the ribose to form the product. After dissociation, two additional enzymatic reactions on the tRNA convert PreQ1 to queuine (Q), resulting in the hypermodified nucleoside queuosine (7-(((4,5-cis-dihydroxy-2-cyclopenten-1-yl)amino)methyl)-7-deazaguanosine). In Bacillus velezensis (strain DSM 23117 / BGSC 10A6 / LMG 26770 / FZB42) (Bacillus amyloliquefaciens subsp. plantarum), this protein is Queuine tRNA-ribosyltransferase.